The following is a 543-amino-acid chain: CTP synthase (543 aa).

The interval methionine 1–leucine 265 is amidoligase domain. Residue serine 13 participates in CTP binding. Serine 13 is a UTP binding site. Serine 14 to isoleucine 19 is a binding site for ATP. Tyrosine 54 is an L-glutamine binding site. Aspartate 71 contributes to the ATP binding site. Positions 71 and 139 each coordinate Mg(2+). CTP-binding positions include aspartate 146 to glutamate 148, lysine 186 to glutamine 191, and lysine 222. UTP contacts are provided by residues lysine 186–glutamine 191 and lysine 222. The region spanning arginine 291–leucine 542 is the Glutamine amidotransferase type-1 domain. Glycine 354 lines the L-glutamine pocket. The Nucleophile; for glutamine hydrolysis role is filled by cysteine 381. L-glutamine is bound by residues phenylalanine 382–glutamine 385, glutamate 405, and arginine 470. Active-site residues include histidine 515 and glutamate 517.

It belongs to the CTP synthase family. In terms of assembly, homotetramer.

The enzyme catalyses UTP + L-glutamine + ATP + H2O = CTP + L-glutamate + ADP + phosphate + 2 H(+). The catalysed reaction is L-glutamine + H2O = L-glutamate + NH4(+). It catalyses the reaction UTP + NH4(+) + ATP = CTP + ADP + phosphate + 2 H(+). It participates in pyrimidine metabolism; CTP biosynthesis via de novo pathway; CTP from UDP: step 2/2. Its activity is regulated as follows. Allosterically activated by GTP, when glutamine is the substrate; GTP has no effect on the reaction when ammonia is the substrate. The allosteric effector GTP functions by stabilizing the protein conformation that binds the tetrahedral intermediate(s) formed during glutamine hydrolysis. Inhibited by the product CTP, via allosteric rather than competitive inhibition. Functionally, catalyzes the ATP-dependent amination of UTP to CTP with either L-glutamine or ammonia as the source of nitrogen. Regulates intracellular CTP levels through interactions with the four ribonucleotide triphosphates. This Gluconacetobacter diazotrophicus (strain ATCC 49037 / DSM 5601 / CCUG 37298 / CIP 103539 / LMG 7603 / PAl5) protein is CTP synthase.